Reading from the N-terminus, the 498-residue chain is ATP synthase subunit beta, chloroplastic (498 aa).

Position 172–179 (172–179 (GGAGVGKT)) interacts with ATP.

Belongs to the ATPase alpha/beta chains family. F-type ATPases have 2 components, CF(1) - the catalytic core - and CF(0) - the membrane proton channel. CF(1) has five subunits: alpha(3), beta(3), gamma(1), delta(1), epsilon(1). CF(0) has four main subunits: a(1), b(1), b'(1) and c(9-12).

It localises to the plastid. The protein localises to the chloroplast thylakoid membrane. It carries out the reaction ATP + H2O + 4 H(+)(in) = ADP + phosphate + 5 H(+)(out). Its function is as follows. Produces ATP from ADP in the presence of a proton gradient across the membrane. The catalytic sites are hosted primarily by the beta subunits. The polypeptide is ATP synthase subunit beta, chloroplastic (Solanum lycopersicum (Tomato)).